Consider the following 203-residue polypeptide: E3 ubiquitin-protein ligase RNF152 (203 aa).

The RING-type zinc finger occupies C12 to R55. Residues S167–L187 traverse the membrane as a helical segment.

Belongs to the RNF152 family.

Its subcellular location is the lysosome membrane. The enzyme catalyses S-ubiquitinyl-[E2 ubiquitin-conjugating enzyme]-L-cysteine + [acceptor protein]-L-lysine = [E2 ubiquitin-conjugating enzyme]-L-cysteine + N(6)-ubiquitinyl-[acceptor protein]-L-lysine.. It functions in the pathway protein modification; protein ubiquitination. In terms of biological role, E3 ubiquitin-protein ligase that acts as a negative regulator of mTORC1 signaling by mediating ubiquitination of RagA/RRAGA and RHEB. Catalyzes 'Lys-63'-linked polyubiquitination of RagA/RRAGA in response to amino acid starvation, thereby regulating mTORC1 signaling. Also mediates monoubiquitination of RHEB, promoting its association with the TSC-TBC complex and subsequent inhibition. Also mediates 'Lys-48'-linked polyubiquitination of target proteins and their subsequent targeting to the proteasome for degradation. The chain is E3 ubiquitin-protein ligase RNF152 from Gallus gallus (Chicken).